A 519-amino-acid chain; its full sequence is Protein amnionless (519 aa).

Positions 1–19 (MGAPGRVLLWLQLCALTRA) are cleaved as a signal peptide. Over 20–430 (AYKLWVPNTY…NAPGARSDLM (411 aa)) the chain is Extracellular. Residues Asn-35 and Asn-39 are each glycosylated (N-linked (GlcNAc...) asparagine). 6 disulfides stabilise this stretch: Cys-43–Cys-152, Cys-193–Cys-267, Cys-259–Cys-265, Cys-277–Cys-303, Cys-288–Cys-304, and Cys-293–Cys-307. Residues 67–143 (SDMEELQDRK…VLASGAGFSA (77 aa)) form an interaction with CUBN region. In terms of domain architecture, VWFC spans 256-308 (PEACADPSGCVCGNAEVQPWICAALLQPLGGRCPQAACQDALRPEGQCCDLCG). A helical membrane pass occupies residues 431 to 451 (GGLVAALLLLLLVLLVAALLL). At 452-519 (RRAGRLRWSR…YGEAEAEAEA (68 aa)) the chain is on the cytoplasmic side.

In terms of assembly, interacts (via extracellular region) with CUBN/cubilin, giving rise to a huge complex containing one AMN chain and three CUBN chains. In terms of processing, N-glycosylated. A soluble form arises by proteolytic removal of the membrane anchor. Detected in kidney cortex (at protein level).

The protein resides in the apical cell membrane. Its subcellular location is the cell membrane. The protein localises to the endosome membrane. It localises to the membrane. It is found in the coated pit. Membrane-bound component of the endocytic receptor formed by AMN and CUBN. Required for normal CUBN glycosylation and trafficking to the cell surface. The complex formed by AMN and CUBN is required for efficient absorption of vitamin B12. Required for normal CUBN-mediated protein transport in the kidney. In Sus scrofa (Pig), this protein is Protein amnionless (AMN).